The following is a 432-amino-acid chain: Glutamate-1-semialdehyde 2,1-aminomutase 1 (432 aa).

Lys-268 carries the post-translational modification N6-(pyridoxal phosphate)lysine.

Belongs to the class-III pyridoxal-phosphate-dependent aminotransferase family. HemL subfamily. Homodimer. Requires pyridoxal 5'-phosphate as cofactor.

The protein resides in the cytoplasm. The catalysed reaction is (S)-4-amino-5-oxopentanoate = 5-aminolevulinate. It functions in the pathway porphyrin-containing compound metabolism; protoporphyrin-IX biosynthesis; 5-aminolevulinate from L-glutamyl-tRNA(Glu): step 2/2. This chain is Glutamate-1-semialdehyde 2,1-aminomutase 1, found in Bacillus mycoides (strain KBAB4) (Bacillus weihenstephanensis).